The following is a 209-amino-acid chain: Octanoyltransferase (209 aa).

One can recognise a BPL/LPL catalytic domain in the interval 29-209 (EHTPDELWVV…CHQLQPEIDS (181 aa)). Residues 71-78 (RGGQVTYH), 138-140 (SLG), and 151-153 (GLA) contribute to the substrate site. Residue Cys-169 is the Acyl-thioester intermediate of the active site.

Belongs to the LipB family.

It localises to the cytoplasm. The catalysed reaction is octanoyl-[ACP] + L-lysyl-[protein] = N(6)-octanoyl-L-lysyl-[protein] + holo-[ACP] + H(+). The protein operates within protein modification; protein lipoylation via endogenous pathway; protein N(6)-(lipoyl)lysine from octanoyl-[acyl-carrier-protein]: step 1/2. Its function is as follows. Catalyzes the transfer of endogenously produced octanoic acid from octanoyl-acyl-carrier-protein onto the lipoyl domains of lipoate-dependent enzymes. Lipoyl-ACP can also act as a substrate although octanoyl-ACP is likely to be the physiological substrate. This Hydrogenovibrio crunogenus (strain DSM 25203 / XCL-2) (Thiomicrospira crunogena) protein is Octanoyltransferase.